The chain runs to 244 residues: 1-(5-phosphoribosyl)-5-[(5-phosphoribosylamino)methylideneamino] imidazole-4-carboxamide isomerase (244 aa).

Aspartate 12 serves as the catalytic Proton acceptor. The active-site Proton donor is aspartate 131.

This sequence belongs to the HisA/HisF family.

The protein resides in the cytoplasm. The enzyme catalyses 1-(5-phospho-beta-D-ribosyl)-5-[(5-phospho-beta-D-ribosylamino)methylideneamino]imidazole-4-carboxamide = 5-[(5-phospho-1-deoxy-D-ribulos-1-ylimino)methylamino]-1-(5-phospho-beta-D-ribosyl)imidazole-4-carboxamide. It participates in amino-acid biosynthesis; L-histidine biosynthesis; L-histidine from 5-phospho-alpha-D-ribose 1-diphosphate: step 4/9. This chain is 1-(5-phosphoribosyl)-5-[(5-phosphoribosylamino)methylideneamino] imidazole-4-carboxamide isomerase, found in Nocardioides sp. (strain ATCC BAA-499 / JS614).